The sequence spans 93 residues: Alpha-defensin 24 (93 aa).

The first 19 residues, 1-19 (MKTLILLSALVLLAFQVQA), serve as a signal peptide directing secretion. A propeptide spanning residues 20-58 (DPIQNTDEETKTEEQPGEEDQAVSVSFGDPEGASLQEES) is cleaved from the precursor. Residues 23–54 (QNTDEETKTEEQPGEEDQAVSVSFGDPEGASL) are disordered. Intrachain disulfides connect C64/C92, C66/C81, and C71/C91.

It belongs to the alpha-defensin family.

It is found in the secreted. Functionally, may have microbicidal activities. This Mus musculus (Mouse) protein is Alpha-defensin 24 (Defa24).